A 224-amino-acid polypeptide reads, in one-letter code: Acyl-protein thioesterase 1 (224 aa).

Residues S116, D170, and H203 each act as charge relay system in the active site.

It belongs to the AB hydrolase superfamily. AB hydrolase 2 family.

It localises to the cytoplasm. The protein resides in the nucleus. It carries out the reaction S-hexadecanoyl-L-cysteinyl-[protein] + H2O = L-cysteinyl-[protein] + hexadecanoate + H(+). Hydrolyzes fatty acids from S-acylated cysteine residues in proteins with a strong preference for palmitoylated G-alpha proteins over other acyl substrates. Mediates the deacylation of G-alpha proteins such as GPA1 in vivo, but has weak or no activity toward palmitoylated Ras proteins. Has weak lysophospholipase activity in vitro; however such activity may not exist in vivo. The protein is Acyl-protein thioesterase 1 of Schizosaccharomyces pombe (strain 972 / ATCC 24843) (Fission yeast).